Reading from the N-terminus, the 306-residue chain is NADH-cytochrome b5 reductase 2-B (306 aa).

Residues 12–32 (PLLLSSGIAVTAAAAVYFSTG) form a helical membrane-spanning segment. In terms of domain architecture, FAD-binding FR-type spans 53–157 (STWVDLPLVK…TGPIVKYEWK (105 aa)). 160 to 195 (KFDSVTLLGAGSGITPLYQLMGSILSNPEDKTKINL) contributes to the FAD binding site.

Belongs to the flavoprotein pyridine nucleotide cytochrome reductase family. FAD serves as cofactor.

The protein localises to the mitochondrion outer membrane. It carries out the reaction 2 Fe(III)-[cytochrome b5] + NADH = 2 Fe(II)-[cytochrome b5] + NAD(+) + H(+). Its function is as follows. May mediate the reduction of outer membrane cytochrome b5. The protein is NADH-cytochrome b5 reductase 2-B (MCR1B) of Vanderwaltozyma polyspora (strain ATCC 22028 / DSM 70294 / BCRC 21397 / CBS 2163 / NBRC 10782 / NRRL Y-8283 / UCD 57-17) (Kluyveromyces polysporus).